The primary structure comprises 36 residues: Conotoxin Bt11.4 (36 aa).

Disulfide bonds link Cys-2–Cys-16, Cys-9–Cys-21, Cys-15–Cys-26, and Cys-20–Cys-33.

It belongs to the conotoxin I1 superfamily. Expressed by the venom duct.

It is found in the secreted. The sequence is that of Conotoxin Bt11.4 from Conus betulinus (Beech cone).